The primary structure comprises 395 residues: Imidazolonepropionase (395 aa).

Fe(3+) is bound by residues His72 and His74. 2 residues coordinate Zn(2+): His72 and His74. Residues Arg81, Tyr144, and His174 each coordinate 4-imidazolone-5-propanoate. N-formimidoyl-L-glutamate is bound at residue Tyr144. His231 is a Fe(3+) binding site. His231 lines the Zn(2+) pocket. Residue Glu234 participates in 4-imidazolone-5-propanoate binding. Residue Asp306 participates in Fe(3+) binding. Asp306 provides a ligand contact to Zn(2+).

Belongs to the metallo-dependent hydrolases superfamily. HutI family. Zn(2+) serves as cofactor. Fe(3+) is required as a cofactor.

It is found in the cytoplasm. The enzyme catalyses 4-imidazolone-5-propanoate + H2O = N-formimidoyl-L-glutamate. Its pathway is amino-acid degradation; L-histidine degradation into L-glutamate; N-formimidoyl-L-glutamate from L-histidine: step 3/3. In terms of biological role, catalyzes the hydrolytic cleavage of the carbon-nitrogen bond in imidazolone-5-propanoate to yield N-formimidoyl-L-glutamate. It is the third step in the universal histidine degradation pathway. The sequence is that of Imidazolonepropionase from Pyrobaculum arsenaticum (strain DSM 13514 / JCM 11321 / PZ6).